Consider the following 232-residue polypeptide: Phosphatidylserine decarboxylase proenzyme (232 aa).

Residue Ser190 is the Schiff-base intermediate with substrate; via pyruvic acid of the active site. The residue at position 190 (Ser190) is a Pyruvic acid (Ser); by autocatalysis.

This sequence belongs to the phosphatidylserine decarboxylase family. PSD-A subfamily. As to quaternary structure, heterodimer of a large membrane-associated beta subunit and a small pyruvoyl-containing alpha subunit. It depends on pyruvate as a cofactor. Is synthesized initially as an inactive proenzyme. Formation of the active enzyme involves a self-maturation process in which the active site pyruvoyl group is generated from an internal serine residue via an autocatalytic post-translational modification. Two non-identical subunits are generated from the proenzyme in this reaction, and the pyruvate is formed at the N-terminus of the alpha chain, which is derived from the carboxyl end of the proenzyme. The post-translation cleavage follows an unusual pathway, termed non-hydrolytic serinolysis, in which the side chain hydroxyl group of the serine supplies its oxygen atom to form the C-terminus of the beta chain, while the remainder of the serine residue undergoes an oxidative deamination to produce ammonia and the pyruvoyl prosthetic group on the alpha chain.

The protein resides in the cell membrane. The enzyme catalyses a 1,2-diacyl-sn-glycero-3-phospho-L-serine + H(+) = a 1,2-diacyl-sn-glycero-3-phosphoethanolamine + CO2. The protein operates within phospholipid metabolism; phosphatidylethanolamine biosynthesis; phosphatidylethanolamine from CDP-diacylglycerol: step 2/2. Its function is as follows. Catalyzes the formation of phosphatidylethanolamine (PtdEtn) from phosphatidylserine (PtdSer). In Rhodopseudomonas palustris (strain TIE-1), this protein is Phosphatidylserine decarboxylase proenzyme.